We begin with the raw amino-acid sequence, 182 residues long: Regulatory protein RecX (182 aa).

The segment at 12–54 (LSQRDHSESELRRKLAAPPFSAKGNWGKRSGAKSSNLVESNPV) is disordered. The segment covering 13 to 24 (SQRDHSESELRR) has biased composition (basic and acidic residues). Positions 43–54 (AKSSNLVESNPV) are enriched in polar residues.

This sequence belongs to the RecX family.

Its subcellular location is the cytoplasm. In terms of biological role, modulates RecA activity. This is Regulatory protein RecX from Yersinia pseudotuberculosis serotype I (strain IP32953).